A 347-amino-acid chain; its full sequence is Endo-1,4-beta-xylanase 3 (347 aa).

The N-terminal stretch at 1–16 (MKANVILCLLAPLVAA) is a signal peptide. The propeptide occupies 17 to 45 (LPTETIHLDPELAALRANLTERTADLWDR). Residue Gln-46 is modified to Pyrrolidone carboxylic acid. The GH10 domain maps to 46–345 (QASQSIDQLI…KPAYNSIVGI (300 aa)). The Proton donor role is filled by Glu-176. The active-site Nucleophile is the Glu-282. Cys-300 and Cys-306 form a disulfide bridge.

The protein belongs to the glycosyl hydrolase 10 (cellulase F) family. As to quaternary structure, monomer. In terms of processing, not glycosylated.

It localises to the secreted. The enzyme catalyses Endohydrolysis of (1-&gt;4)-beta-D-xylosidic linkages in xylans.. The protein operates within glycan degradation; xylan degradation. In terms of biological role, glycoside hydrolase involved in the hydrolysis of xylan, a major plant cell wall hemicellulose made up of 1,4-beta-linked D-xylopyranose residues. Catalyzes the endohydrolysis of the main-chain 1,4-beta-glycosidic bonds connecting the xylose subunits yielding various xylooligosaccharides and xylose. Produces xylobiose and xylotriose as the main degradation products. This chain is Endo-1,4-beta-xylanase 3 (xyn3), found in Hypocrea jecorina (strain QM6a) (Trichoderma reesei).